The sequence spans 746 residues: Histone-lysine N-methyltransferase EZH2 (746 aa).

Residues 1 to 340 (MGQTGKKSEK…AKEFAAALTA (340 aa)) are interaction with DNMT1, DNMT3A and DNMT3B. The residue at position 21 (S21) is a Phosphoserine; by PKB/AKT1. Residues 39-68 (KSMFSSNRQKILERTEILNQEWKQRRIQPV) are interaction with EED. S75 is a glycosylation site (O-linked (GlcNAc) serine). S76 bears the Phosphoserine mark. The segment at 180-222 (QYNDDDDDDDGDDPEEREEKQKDLEDHRDDKESRPPRKFPSDK) is disordered. A compositionally biased stretch (acidic residues) spans 182–195 (NDDDDDDDGDDPEE). The span at 196 to 222 (REEKQKDLEDHRDDKESRPPRKFPSDK) shows a compositional bias: basic and acidic residues. Residues 329 to 522 (EGAKEFAAAL…SSNHVYNYQP (194 aa)) are interaction with CDYL. T339 bears the Phosphothreonine mark. Positions 340–426 (AERIKTPPKR…PIKMKPNIEP (87 aa)) are disordered. T345 carries the phosphothreonine; by CDK1 and CDK2 modification. Over residues 345–357 (TPPKRPGGRRRGR) the composition is skewed to basic residues. Residues S363 and S366 each carry the phosphoserine modification. T367 is subject to Phosphothreonine. Over residues 374–385 (ESKDTDSDREAG) the composition is skewed to basic and acidic residues. Residue T487 is modified to Phosphothreonine. Positions 503–605 (CRKIQLKKDG…SKNVSCKNCS (103 aa)) constitute a CXC domain. The SET domain occupies 612-727 (KHLLLAPSDV…TGEELFFDYR (116 aa)). Residue K634 forms a Glycyl lysine isopeptide (Lys-Gly) (interchain with G-Cter in SUMO2) linkage.

Belongs to the class V-like SAM-binding methyltransferase superfamily. Histone-lysine methyltransferase family. EZ subfamily. In terms of assembly, component of the PRC2/EED-EZH2 complex, which includes EED, EZH2, SUZ12, RBBP4 and RBBP7 and possibly AEBP2. The minimum components required for methyltransferase activity of the PRC2/EED-EZH2 complex are EED, EZH2 and SUZ12. The PRC2 complex may also interact with DNMT1, DNMT3A, DNMT3B and PHF1 via the EZH2 subunit and with SIRT1 via the SUZ12 subunit. Interacts with HDAC1 and HDAC2. Binds ATRX via the SET domain. Interacts with PRAME. Interacts with CDYL. Interacts with CLOCK, BMAL1 and CRY1. Interacts with DNMT3L; the interaction is direct. Interacts with EZHIP; the interaction blocks EZH2 methyltransferase activity. Interacts with ZNF263; recruited to the SIX3 promoter along with other proteins involved in chromatin modification and transcriptional corepression where it contributes to transcriptional repression. Interacts with ARMC12. Interacts with ZMYND8; the interaction is dependent on the presence of chromatin. Interacts with DDX18; this interaction inhibits the PRC2 complex. Post-translationally, phosphorylated by AKT1. Phosphorylation by AKT1 reduces methyltransferase activity. Phosphorylation at Thr-345 by CDK1 and CDK2 promotes maintenance of H3K27me3 levels at EZH2-target loci, thus leading to epigenetic gene silencing. Sumoylated. In terms of processing, glycosylated: O-GlcNAcylation at Ser-75 by OGT increases stability of EZH2 and facilitates the formation of H3K27me3 by the PRC2/EED-EZH2 complex. In the ovary, expressed in primordial follicles and oocytes and also in external follicle cells (at protein level). Expressed in many tissues. Overexpressed in numerous tumor types including carcinomas of the breast, colon, larynx, lymphoma and testis.

It is found in the nucleus. It carries out the reaction L-lysyl(27)-[histone H3] + 3 S-adenosyl-L-methionine = N(6),N(6),N(6)-trimethyl-L-lysyl(27)-[histone H3] + 3 S-adenosyl-L-homocysteine + 3 H(+). Functionally, polycomb group (PcG) protein. Catalytic subunit of the PRC2/EED-EZH2 complex, which methylates 'Lys-9' (H3K9me) and 'Lys-27' (H3K27me) of histone H3, leading to transcriptional repression of the affected target gene. Able to mono-, di- and trimethylate 'Lys-27' of histone H3 to form H3K27me1, H3K27me2 and H3K27me3, respectively. Displays a preference for substrates with less methylation, loses activity when progressively more methyl groups are incorporated into H3K27, H3K27me0 &gt; H3K27me1 &gt; H3K27me2. Compared to EZH1-containing complexes, it is more abundant in embryonic stem cells and plays a major role in forming H3K27me3, which is required for embryonic stem cell identity and proper differentiation. The PRC2/EED-EZH2 complex may also serve as a recruiting platform for DNA methyltransferases, thereby linking two epigenetic repression systems. Genes repressed by the PRC2/EED-EZH2 complex include HOXC8, HOXA9, MYT1, CDKN2A and retinoic acid target genes. EZH2 can also methylate non-histone proteins such as the transcription factor GATA4 and the nuclear receptor RORA. Regulates the circadian clock via histone methylation at the promoter of the circadian genes. Essential for the CRY1/2-mediated repression of the transcriptional activation of PER1/2 by the CLOCK-BMAL1 heterodimer; involved in the di and trimethylation of 'Lys-27' of histone H3 on PER1/2 promoters which is necessary for the CRY1/2 proteins to inhibit transcription. The polypeptide is Histone-lysine N-methyltransferase EZH2 (Homo sapiens (Human)).